The sequence spans 95 residues: MSFKFEAEVRSAQGKGASRRLRHNGQVPAIIYGGNAEPVSIILDHDKVNNVQIHDAFYNEVLTIVLAEKEVQVKVQAIQRHPTKPKLLHLDFKRV.

Belongs to the bacterial ribosomal protein bL25 family. Part of the 50S ribosomal subunit; part of the 5S rRNA/L5/L18/L25 subcomplex. Contacts the 5S rRNA. Binds to the 5S rRNA independently of L5 and L18.

This is one of the proteins that binds to the 5S RNA in the ribosome where it forms part of the central protuberance. The sequence is that of Large ribosomal subunit protein bL25 from Haemophilus ducreyi (strain 35000HP / ATCC 700724).